We begin with the raw amino-acid sequence, 506 residues long: ATP synthase subunit alpha, chloroplastic (506 aa).

170–177 is a binding site for ATP; it reads GDRQTGKT.

Belongs to the ATPase alpha/beta chains family. F-type ATPases have 2 components, CF(1) - the catalytic core - and CF(0) - the membrane proton channel. CF(1) has five subunits: alpha(3), beta(3), gamma(1), delta(1), epsilon(1). CF(0) has four main subunits: a, b, b' and c.

The protein localises to the plastid. It is found in the chloroplast thylakoid membrane. It carries out the reaction ATP + H2O + 4 H(+)(in) = ADP + phosphate + 5 H(+)(out). Its function is as follows. Produces ATP from ADP in the presence of a proton gradient across the membrane. The alpha chain is a regulatory subunit. This is ATP synthase subunit alpha, chloroplastic from Chlorokybus atmophyticus (Soil alga).